Here is a 146-residue protein sequence, read N- to C-terminus: Cytidine deaminase (146 aa).

Residues 13 to 140 enclose the CMP/dCMP-type deaminase domain; the sequence is ECVQQLLVCS…ELLPSSFGPE (128 aa). 54–60 contacts substrate; that stretch reads NIENACY. Cysteine 65 contacts Zn(2+). Glutamate 67 (proton donor) is an active-site residue. Zn(2+) contacts are provided by cysteine 99 and cysteine 102.

Belongs to the cytidine and deoxycytidylate deaminase family. Homotetramer. The cofactor is Zn(2+). As to expression, highly expressed in granulocytes while expression is very low in fibroblasts, chondrocytes, monocytes, and T- as well as B-cell lines.

It carries out the reaction cytidine + H2O + H(+) = uridine + NH4(+). The enzyme catalyses 2'-deoxycytidine + H2O + H(+) = 2'-deoxyuridine + NH4(+). Functionally, this enzyme scavenges exogenous and endogenous cytidine and 2'-deoxycytidine for UMP synthesis. The protein is Cytidine deaminase of Homo sapiens (Human).